The chain runs to 309 residues: Olfactory receptor 8U1 (309 aa).

The Extracellular portion of the chain corresponds to Met1 to Met25. Asn5 is a glycosylation site (N-linked (GlcNAc...) asparagine). Residues Pro26–Ile46 form a helical membrane-spanning segment. Residues Leu47 to Ser54 are Cytoplasmic-facing. The helical transmembrane segment at Leu55 to Ser75 threads the bilayer. At Val76–Thr99 the chain is on the extracellular side. Cys97 and Cys189 form a disulfide bridge. Residues Gln100 to Tyr120 form a helical membrane-spanning segment. At Asp121–Gly139 the chain is on the cytoplasmic side. A helical transmembrane segment spans residues Ile140–Thr160. Over Ile161–Leu197 the chain is Extracellular. The helical transmembrane segment at Trp198–Ser217 threads the bilayer. Topologically, residues Tyr218–Ala237 are cytoplasmic. Residues Phe238–Met258 form a helical membrane-spanning segment. The Extracellular segment spans residues Tyr259 to Asp271. Residues Lys272–Leu292 form a helical membrane-spanning segment. At Gln293–Asn309 the chain is on the cytoplasmic side.

Belongs to the G-protein coupled receptor 1 family.

Its subcellular location is the cell membrane. Odorant receptor. The protein is Olfactory receptor 8U1 (OR8U1) of Homo sapiens (Human).